The following is a 278-amino-acid chain: Phosphonates import ATP-binding protein PhnC (278 aa).

Residues 25-273 enclose the ABC transporter domain; the sequence is LAVKGLVKAY…IIQDIYSDES (249 aa). 58 to 65 contacts ATP; sequence GRSGAGKS.

It belongs to the ABC transporter superfamily. Phosphonates importer (TC 3.A.1.9.1) family. The complex is composed of two ATP-binding proteins (PhnC), two transmembrane proteins (PhnE) and a solute-binding protein (PhnD).

It localises to the cell inner membrane. It catalyses the reaction phosphonate(out) + ATP + H2O = phosphonate(in) + ADP + phosphate + H(+). Part of the ABC transporter complex PhnCDE involved in phosphonates import. Responsible for energy coupling to the transport system. This is Phosphonates import ATP-binding protein PhnC from Yersinia pestis bv. Antiqua (strain Antiqua).